Reading from the N-terminus, the 288-residue chain is 4-hydroxy-3-methylbut-2-enyl diphosphate reductase (288 aa).

A [4Fe-4S] cluster-binding site is contributed by Cys13. (2E)-4-hydroxy-3-methylbut-2-enyl diphosphate contacts are provided by His41 and His75. The dimethylallyl diphosphate site is built by His41 and His75. The isopentenyl diphosphate site is built by His41 and His75. Residue Cys97 coordinates [4Fe-4S] cluster. His130 is a binding site for (2E)-4-hydroxy-3-methylbut-2-enyl diphosphate. His130 is a binding site for dimethylallyl diphosphate. His130 contributes to the isopentenyl diphosphate binding site. Glu132 acts as the Proton donor in catalysis. Residue Thr168 participates in (2E)-4-hydroxy-3-methylbut-2-enyl diphosphate binding. A [4Fe-4S] cluster-binding site is contributed by Cys199. Residues Ser227, Ser228, Asn229, and Ser271 each coordinate (2E)-4-hydroxy-3-methylbut-2-enyl diphosphate. Dimethylallyl diphosphate-binding residues include Ser227, Ser228, Asn229, and Ser271. Ser227, Ser228, Asn229, and Ser271 together coordinate isopentenyl diphosphate.

This sequence belongs to the IspH family. Requires [4Fe-4S] cluster as cofactor.

The enzyme catalyses isopentenyl diphosphate + 2 oxidized [2Fe-2S]-[ferredoxin] + H2O = (2E)-4-hydroxy-3-methylbut-2-enyl diphosphate + 2 reduced [2Fe-2S]-[ferredoxin] + 2 H(+). It catalyses the reaction dimethylallyl diphosphate + 2 oxidized [2Fe-2S]-[ferredoxin] + H2O = (2E)-4-hydroxy-3-methylbut-2-enyl diphosphate + 2 reduced [2Fe-2S]-[ferredoxin] + 2 H(+). The protein operates within isoprenoid biosynthesis; dimethylallyl diphosphate biosynthesis; dimethylallyl diphosphate from (2E)-4-hydroxy-3-methylbutenyl diphosphate: step 1/1. It functions in the pathway isoprenoid biosynthesis; isopentenyl diphosphate biosynthesis via DXP pathway; isopentenyl diphosphate from 1-deoxy-D-xylulose 5-phosphate: step 6/6. In terms of biological role, catalyzes the conversion of 1-hydroxy-2-methyl-2-(E)-butenyl 4-diphosphate (HMBPP) into a mixture of isopentenyl diphosphate (IPP) and dimethylallyl diphosphate (DMAPP). Acts in the terminal step of the DOXP/MEP pathway for isoprenoid precursor biosynthesis. This Phocaeicola vulgatus (strain ATCC 8482 / DSM 1447 / JCM 5826 / CCUG 4940 / NBRC 14291 / NCTC 11154) (Bacteroides vulgatus) protein is 4-hydroxy-3-methylbut-2-enyl diphosphate reductase.